A 314-amino-acid chain; its full sequence is Endo-beta-N-acetylglucosaminidase (314 aa).

A signal peptide spans 1–47; the sequence is MQFGIVAAIADGGRTARAGGSVRPPRRPPASHTAWGLPRGRPTGQPH. Residues 14 to 54 are disordered; sequence RTARAGGSVRPPRRPPASHTAWGLPRGRPTGQPHATPTKSG. Residues 55-309 form the GH18 domain; sequence PTSIAYVEVN…SSMTKVLYGQ (255 aa). Glu175 functions as the Proton donor in the catalytic mechanism.

This sequence belongs to the glycosyl hydrolase 18 family. Monomer.

The protein localises to the secreted. It catalyses the reaction an N(4)-(oligosaccharide-(1-&gt;3)-[oligosaccharide-(1-&gt;6)]-beta-D-Man-(1-&gt;4)-beta-D-GlcNAc-(1-&gt;4)-alpha-D-GlcNAc)-L-asparaginyl-[protein] + H2O = an oligosaccharide-(1-&gt;3)-[oligosaccharide-(1-&gt;6)]-beta-D-Man-(1-&gt;4)-D-GlcNAc + N(4)-(N-acetyl-beta-D-glucosaminyl)-L-asparaginyl-[protein]. Functionally, cleaves asparagine-linked oligomannose and hybrid, but not complex, oligosaccharides from glycoproteins. This chain is Endo-beta-N-acetylglucosaminidase, found in Flavobacterium sp. (strain SK1022).